The following is a 522-amino-acid chain: Protein RCC2 (522 aa).

The disordered stretch occupies residues 1 to 83 (MPRKKAAAAA…TAGKAGGAAV (83 aa)). A Phosphoserine modification is found at S16. T20 is subject to Phosphothreonine. The span at 24-36 (GPRKRGGPAGRKR) shows a compositional bias: basic residues. A phosphoserine mark is found at S43, S44, S45, S46, S50, and S51. Residues 71–82 (RPATAGKAGGAA) show a composition bias toward low complexity. Residues K92 and K124 each carry the N6-acetyllysine modification. RCC1 repeat units lie at residues 103–165 (KGQL…SLLI), 168–219 (EGKL…ALTE), 221–271 (GSVF…IMDC), 273–347 (GNLY…VLDS), 348–401 (QKRV…AVSE), 403–447 (GGLF…VAAD), and 448–501 (ESTI…VIAR). K293 is subject to N6-acetyllysine. Positions 318 to 325 (KTKDGQIL) are required for interaction with RAC1. T342 carries the phosphothreonine modification. K377 is modified (N6-acetyllysine). The span at 502–515 (DESETEKEKIKKLP) shows a compositional bias: basic and acidic residues. The disordered stretch occupies residues 502–522 (DESETEKEKIKKLPEYNPRTL).

As to quaternary structure, interacts with RAC1. Interacts with nucleotide-free and with GDP and GTP-bound forms of RAC1, with a slight preference for GDP-bound RAC1. Binds preferentially to the nucleotide-free form of RAC1. Interacts with CORO1C. Interacts with microtubules.

The protein resides in the nucleus. The protein localises to the nucleolus. It localises to the cytoplasm. Its subcellular location is the cytoskeleton. It is found in the chromosome. The protein resides in the centromere. The protein localises to the spindle. It localises to the midbody. Its subcellular location is the cell membrane. Its function is as follows. Multifunctional protein that may affect its functions by regulating the activity of small GTPases, such as RAC1 and RALA. Required for normal progress through the cell cycle, both during interphase and during mitosis. Required for the presence of normal levels of MAD2L1, AURKB and BIRC5 on inner centromeres during mitosis, and for normal attachment of kinetochores to mitotic spindles. Required for normal organization of the microtubule cytoskeleton in interphase cells. Functions as guanine nucleotide exchange factor (GEF) for RALA. Interferes with the activation of RAC1 by guanine nucleotide exchange factors. Prevents accumulation of active, GTP-bound RAC1, and suppresses RAC1-mediated reorganization of the actin cytoskeleton and formation of membrane protrusions. Required for normal cellular responses to contacts with the extracellular matrix of adjacent cells, and for directional cell migration in response to a fibronectin gradient (in vitro). This is Protein RCC2 (RCC2) from Homo sapiens (Human).